The sequence spans 590 residues: Aspartate--tRNA(Asp/Asn) ligase (590 aa).

Glutamate 178 contacts L-aspartate. The interval 202 to 205 is aspartate; it reads QIYK. Residue arginine 224 participates in L-aspartate binding. ATP contacts are provided by residues 224-226 and glutamine 233; that span reads RDE. Histidine 453 contacts L-aspartate. Glutamate 487 lines the ATP pocket. Position 494 (arginine 494) interacts with L-aspartate. Position 539–542 (539–542) interacts with ATP; the sequence is GLDR.

This sequence belongs to the class-II aminoacyl-tRNA synthetase family. Type 1 subfamily. In terms of assembly, homodimer.

It is found in the cytoplasm. The catalysed reaction is tRNA(Asx) + L-aspartate + ATP = L-aspartyl-tRNA(Asx) + AMP + diphosphate. Its function is as follows. Aspartyl-tRNA synthetase with relaxed tRNA specificity since it is able to aspartylate not only its cognate tRNA(Asp) but also tRNA(Asn). Reaction proceeds in two steps: L-aspartate is first activated by ATP to form Asp-AMP and then transferred to the acceptor end of tRNA(Asp/Asn). The chain is Aspartate--tRNA(Asp/Asn) ligase from Treponema denticola (strain ATCC 35405 / DSM 14222 / CIP 103919 / JCM 8153 / KCTC 15104).